The following is an 88-amino-acid chain: Small ribosomal subunit protein bS20 (88 aa).

It belongs to the bacterial ribosomal protein bS20 family.

In terms of biological role, binds directly to 16S ribosomal RNA. This is Small ribosomal subunit protein bS20 from Desulforudis audaxviator (strain MP104C).